The chain runs to 433 residues: tRNA-2-methylthio-N(6)-dimethylallyladenosine synthase (433 aa).

In terms of domain architecture, MTTase N-terminal spans 4–119; the sequence is KKLFIQTLGC…ITQAIKTPKF (116 aa). Residues C13, C50, C82, C151, C155, and C158 each contribute to the [4Fe-4S] cluster site. Residues 137–370 form the Radical SAM core domain; it reads RNSIYKSYIN…QNRHSEILDE (234 aa). Residues 373–433 form the TRAM domain; the sequence is KKQENKTFKV…KRMVLYGEIV (61 aa).

The protein belongs to the methylthiotransferase family. MiaB subfamily. Monomer. Requires [4Fe-4S] cluster as cofactor.

It is found in the cytoplasm. The catalysed reaction is N(6)-dimethylallyladenosine(37) in tRNA + (sulfur carrier)-SH + AH2 + 2 S-adenosyl-L-methionine = 2-methylsulfanyl-N(6)-dimethylallyladenosine(37) in tRNA + (sulfur carrier)-H + 5'-deoxyadenosine + L-methionine + A + S-adenosyl-L-homocysteine + 2 H(+). Functionally, catalyzes the methylthiolation of N6-(dimethylallyl)adenosine (i(6)A), leading to the formation of 2-methylthio-N6-(dimethylallyl)adenosine (ms(2)i(6)A) at position 37 in tRNAs that read codons beginning with uridine. In Campylobacter jejuni (strain RM1221), this protein is tRNA-2-methylthio-N(6)-dimethylallyladenosine synthase.